The chain runs to 404 residues: Cysteine desulfurase IscS (404 aa).

Pyridoxal 5'-phosphate contacts are provided by residues 75-76, Asn155, Gln183, and 203-205; these read AT and SAH. Lys206 is modified (N6-(pyridoxal phosphate)lysine). Thr243 contacts pyridoxal 5'-phosphate. Catalysis depends on Cys328, which acts as the Cysteine persulfide intermediate. [2Fe-2S] cluster is bound at residue Cys328.

The protein belongs to the class-V pyridoxal-phosphate-dependent aminotransferase family. NifS/IscS subfamily. In terms of assembly, homodimer. Forms a heterotetramer with IscU, interacts with other sulfur acceptors. It depends on pyridoxal 5'-phosphate as a cofactor.

Its subcellular location is the cytoplasm. It catalyses the reaction (sulfur carrier)-H + L-cysteine = (sulfur carrier)-SH + L-alanine. Its pathway is cofactor biosynthesis; iron-sulfur cluster biosynthesis. Functionally, master enzyme that delivers sulfur to a number of partners involved in Fe-S cluster assembly, tRNA modification or cofactor biosynthesis. Catalyzes the removal of elemental sulfur atoms from cysteine to produce alanine. Functions as a sulfur delivery protein for Fe-S cluster synthesis onto IscU, an Fe-S scaffold assembly protein, as well as other S acceptor proteins. This chain is Cysteine desulfurase IscS, found in Neisseria gonorrhoeae (strain ATCC 700825 / FA 1090).